We begin with the raw amino-acid sequence, 276 residues long: MGIKKYNPTTNGRRNMTTNDFAEITTDRPEKSLLAPLSKKAGRNNQGKITVRHQGGGHKRQYRIIDFKRNEDGIPGRVATIEYDPNRSANIALINYVDGEKRYILAPKNLEVGMEIMSGAEADIKIGNALPLINIPVGTVVHNIELKPGRGGQLVRSAGTSAQVLGKEGKYVLVRLTSGEVRLVLSACRAAVGQVGNESHELIKIGKAGRSRWLGKRPTVRGSVMNPVDHPHGGGEGRSPIGRKSPMSPWGKPTLGFKTRKKNKASDKFIVRRRKK.

Disordered stretches follow at residues 1–20 and 219–276; these read MGIK…TTND and TVRG…RRKK. A compositionally biased stretch (polar residues) spans 7–20; sequence NPTTNGRRNMTTND.

It belongs to the universal ribosomal protein uL2 family. In terms of assembly, part of the 50S ribosomal subunit. Forms a bridge to the 30S subunit in the 70S ribosome.

Its function is as follows. One of the primary rRNA binding proteins. Required for association of the 30S and 50S subunits to form the 70S ribosome, for tRNA binding and peptide bond formation. It has been suggested to have peptidyltransferase activity; this is somewhat controversial. Makes several contacts with the 16S rRNA in the 70S ribosome. The protein is Large ribosomal subunit protein uL2 of Bacillus cereus (strain Q1).